A 292-amino-acid polypeptide reads, in one-letter code: Histamine N-methyltransferase (292 aa).

E28 lines the substrate pocket. Residues G60, E89, Q94, S120, and I142 each coordinate S-adenosyl-L-methionine. Residue N283 participates in substrate binding.

It belongs to the class I-like SAM-binding methyltransferase superfamily. HNMT family. Monomer. Expressed in jejunum, brain &gt; lung, spleen, stomach &gt; liver, kidney.

It localises to the cytoplasm. The enzyme catalyses histamine + S-adenosyl-L-methionine = N(tau)-methylhistamine + S-adenosyl-L-homocysteine + H(+). In terms of biological role, inactivates histamine by N-methylation. Plays an important role in degrading histamine and in regulating the airway response to histamine. The polypeptide is Histamine N-methyltransferase (HNMT) (Cavia porcellus (Guinea pig)).